The following is a 161-amino-acid chain: Regulator of ribonuclease activity A (161 aa).

It belongs to the RraA family. In terms of assembly, homotrimer. Binds to both RNA-binding sites in the C-terminal region of Rne and to RhlB.

The protein resides in the cytoplasm. Globally modulates RNA abundance by binding to RNase E (Rne) and regulating its endonucleolytic activity. Can modulate Rne action in a substrate-dependent manner by altering the composition of the degradosome. Modulates RNA-binding and helicase activities of the degradosome. The polypeptide is Regulator of ribonuclease activity A (Enterobacter sp. (strain 638)).